Consider the following 58-residue polypeptide: Ribosome modulation factor (58 aa).

Basic residues predominate over residues 1–14 (MKRQKRDKLTRAHS). The disordered stretch occupies residues 1-25 (MKRQKRDKLTRAHSKGYQAGISGRS).

Belongs to the ribosome modulation factor family.

The protein localises to the cytoplasm. In terms of biological role, during stationary phase, converts 70S ribosomes to an inactive dimeric form (100S ribosomes). This is Ribosome modulation factor from Alteromonas naphthalenivorans.